The primary structure comprises 307 residues: Aspartate carbamoyltransferase catalytic subunit (307 aa).

Residues arginine 54 and threonine 55 each coordinate carbamoyl phosphate. Lysine 83 is an L-aspartate binding site. 3 residues coordinate carbamoyl phosphate: arginine 104, histidine 132, and glutamine 135. Arginine 165 and arginine 228 together coordinate L-aspartate. 2 residues coordinate carbamoyl phosphate: leucine 267 and proline 268.

This sequence belongs to the aspartate/ornithine carbamoyltransferase superfamily. ATCase family. In terms of assembly, heterododecamer (2C3:3R2) of six catalytic PyrB chains organized as two trimers (C3), and six regulatory PyrI chains organized as three dimers (R2).

It catalyses the reaction carbamoyl phosphate + L-aspartate = N-carbamoyl-L-aspartate + phosphate + H(+). It participates in pyrimidine metabolism; UMP biosynthesis via de novo pathway; (S)-dihydroorotate from bicarbonate: step 2/3. Functionally, catalyzes the condensation of carbamoyl phosphate and aspartate to form carbamoyl aspartate and inorganic phosphate, the committed step in the de novo pyrimidine nucleotide biosynthesis pathway. The protein is Aspartate carbamoyltransferase catalytic subunit of Clostridium perfringens (strain SM101 / Type A).